The primary structure comprises 433 residues: Adenosylhomocysteinase A (433 aa).

Residues threonine 57, aspartate 132, glutamate 157, lysine 187, and aspartate 191 each coordinate substrate. An NAD binding region spans residues 184–351; sequence SVTKSKFDNL…EGRLVNLGCA (168 aa).

The protein belongs to the adenosylhomocysteinase family. Homotetramer. It depends on NAD(+) as a cofactor.

It localises to the cytoplasm. The enzyme catalyses S-adenosyl-L-homocysteine + H2O = L-homocysteine + adenosine. The protein operates within amino-acid biosynthesis; L-homocysteine biosynthesis; L-homocysteine from S-adenosyl-L-homocysteine: step 1/1. Catalyzes the hydrolysis of S-adenosyl-L-homocysteine to form adenosine and homocysteine. Binds copper ions. This is Adenosylhomocysteinase A (ahcy-a) from Xenopus laevis (African clawed frog).